Consider the following 918-residue polypeptide: uncharacterized protein (918 aa).

Disordered stretches follow at residues 66–150 (AMVH…SSYG), 226–283 (GADG…NADF), 326–481 (ADGT…EFGN), 515–548 (ALEK…GSNL), 594–707 (EITH…NAVK), 737–774 (NHSN…SHLT), and 800–918 (HITH…IIQM). A compositionally biased stretch (low complexity) spans 79-89 (QSSGSSSNTHS). The segment covering 103–127 (NSEKKDGYNKESKVDEANENTKIKS) has biased composition (basic and acidic residues). Residues 270-281 (SKKAASASGSNA) are compositionally biased toward low complexity. 3 stretches are compositionally biased toward polar residues: residues 326–354 (ADGT…SSDL), 363–372 (KSHSTSNKTD), and 379–404 (ANQS…SSIE). Low complexity predominate over residues 430–441 (SSSHSKSASGTS). The segment covering 515–533 (ALEKNHEKNSDGTFKDESK) has biased composition (basic and acidic residues). 2 stretches are compositionally biased toward polar residues: residues 534 to 545 (GSNSRVNRTDGG) and 604 to 619 (VAAS…TSMS). Residues 632–647 (SSQAADSHDAISASSD) are compositionally biased toward low complexity. The segment covering 648–660 (VDAKIVKHADRSE) has biased composition (basic and acidic residues). Residues 661-672 (SISNDSSNQTAS) show a composition bias toward polar residues. Over residues 673-688 (EHNDSSKQSEHEKRQN) the composition is skewed to basic and acidic residues. Over residues 689–702 (ADGSFSDVSSNSAK) the composition is skewed to polar residues. Composition is skewed to basic and acidic residues over residues 738–765 (HSND…DAKH), 800–814 (HITH…DAGH), 830–846 (EGFK…EGAQ), and 883–918 (LAKD…IIQM).

This is an uncharacterized protein from Caenorhabditis elegans.